Reading from the N-terminus, the 424-residue chain is MLDLKRIRTNPEEIKKALTNRGEDFDISVIDELVSLDEERRKNLVEVENLKSKRNKDSGEIAKLKKSGQNADELLAEMKKISDDIKGIDAKVSEIDEKMQYIMLRIPNIPHPSVPEGKSDEENVEIRKWGEPRKFDFEFKAHWDIGTDLGLLDFERGGKVAGSRFTFYKGLGARLERAVINYFLDTHVEKHGYTEILPPYMVNRVSMTGTGQLPKFEEDAFKVDNGFFLIPTAEVPVTNMFRDEILKAEDLPYKFAAYSACFRSEAGSAGRDTRGLVRQHQFNKVELVKFAKPEESYDELEKLTHDAEEILQILNIPYRVVRICKGDLGFTAALKYDIEVWMPSYGRYVEISSCSNFEDFQARRANIKFRRDPKAKPEFVHTLNGSGLAVGRTVAAILENYQNEDGSVNVPEALKKYIGKDVIR.

232–234 (TAE) provides a ligand contact to L-serine. Residue 263–265 (RSE) coordinates ATP. Glutamate 286 provides a ligand contact to L-serine. 350-353 (EISS) provides a ligand contact to ATP. Serine 386 is a binding site for L-serine.

This sequence belongs to the class-II aminoacyl-tRNA synthetase family. Type-1 seryl-tRNA synthetase subfamily. In terms of assembly, homodimer. The tRNA molecule binds across the dimer.

It localises to the cytoplasm. The catalysed reaction is tRNA(Ser) + L-serine + ATP = L-seryl-tRNA(Ser) + AMP + diphosphate + H(+). The enzyme catalyses tRNA(Sec) + L-serine + ATP = L-seryl-tRNA(Sec) + AMP + diphosphate + H(+). Its pathway is aminoacyl-tRNA biosynthesis; selenocysteinyl-tRNA(Sec) biosynthesis; L-seryl-tRNA(Sec) from L-serine and tRNA(Sec): step 1/1. Functionally, catalyzes the attachment of serine to tRNA(Ser). Is also able to aminoacylate tRNA(Sec) with serine, to form the misacylated tRNA L-seryl-tRNA(Sec), which will be further converted into selenocysteinyl-tRNA(Sec). This Clostridium acetobutylicum (strain ATCC 824 / DSM 792 / JCM 1419 / IAM 19013 / LMG 5710 / NBRC 13948 / NRRL B-527 / VKM B-1787 / 2291 / W) protein is Serine--tRNA ligase 1.